The primary structure comprises 151 residues: UPF0756 membrane protein Dred_1097 (151 aa).

A run of 4 helical transmembrane segments spans residues 6 to 26 (IILLSLILMGYLAESALLATA), 52 to 72 (VGLIFLMLSVLVPLAHDNIVY), 75 to 95 (LVMKTLSPQGLLALIGGTLAT), and 111 to 131 (LIFGMVIGSLIGIVFLGGIPI).

Belongs to the UPF0756 family.

The protein resides in the cell membrane. This Desulforamulus reducens (strain ATCC BAA-1160 / DSM 100696 / MI-1) (Desulfotomaculum reducens) protein is UPF0756 membrane protein Dred_1097.